We begin with the raw amino-acid sequence, 371 residues long: Queuine tRNA-ribosyltransferase (371 aa).

Asp90 acts as the Proton acceptor in catalysis. Substrate is bound by residues 90 to 94, Asp144, Gln189, and Gly215; that span reads DSGGF. The interval 246–252 is RNA binding; the sequence is GVGTPEN. Asp265 functions as the Nucleophile in the catalytic mechanism. Residues 270–274 form an RNA binding; important for wobble base 34 recognition region; sequence TRNAR. 4 residues coordinate Zn(2+): Cys303, Cys305, Cys308, and His334.

The protein belongs to the queuine tRNA-ribosyltransferase family. As to quaternary structure, homodimer. Within each dimer, one monomer is responsible for RNA recognition and catalysis, while the other monomer binds to the replacement base PreQ1. The cofactor is Zn(2+).

The enzyme catalyses 7-aminomethyl-7-carbaguanine + guanosine(34) in tRNA = 7-aminomethyl-7-carbaguanosine(34) in tRNA + guanine. The protein operates within tRNA modification; tRNA-queuosine biosynthesis. Its function is as follows. Catalyzes the base-exchange of a guanine (G) residue with the queuine precursor 7-aminomethyl-7-deazaguanine (PreQ1) at position 34 (anticodon wobble position) in tRNAs with GU(N) anticodons (tRNA-Asp, -Asn, -His and -Tyr). Catalysis occurs through a double-displacement mechanism. The nucleophile active site attacks the C1' of nucleotide 34 to detach the guanine base from the RNA, forming a covalent enzyme-RNA intermediate. The proton acceptor active site deprotonates the incoming PreQ1, allowing a nucleophilic attack on the C1' of the ribose to form the product. After dissociation, two additional enzymatic reactions on the tRNA convert PreQ1 to queuine (Q), resulting in the hypermodified nucleoside queuosine (7-(((4,5-cis-dihydroxy-2-cyclopenten-1-yl)amino)methyl)-7-deazaguanosine). This Helicobacter pylori (strain Shi470) protein is Queuine tRNA-ribosyltransferase.